The following is a 320-amino-acid chain: MENRNTFSWVKEQMTRSISVSIMIYVITRTSISNAYPIFAQQGYENPREATGRIVCANCHLANKPVDIEVPQAVLPDTVFEAVLRIPYDMQLKQVLANGKKGGLNVGAVLILPEGFELAPPDRISPELKEKIGNLSFQSYRPNKKNILVIGPVPGKKYSEIVFPILSPDPAMKKDVHFLKYPIYVGGNRGRGQIYPDGSKSNNTVYNATSTGVVRKILRKEKGGYEISIVDASDGRQVIDLIPPGPELLVSEGESIKLDQPLTSNPNVGGFGQGDAEIVLQDPLRVQGLLFFFASVILAQVFLVLKKKQFEKVQLYEMNF.

Residues 1-35 form the signal peptide; the sequence is MENRNTFSWVKEQMTRSISVSIMIYVITRTSISNA. Heme is bound by residues tyrosine 36, cysteine 56, cysteine 59, and histidine 60. A helical transmembrane segment spans residues 286–306; it reads VQGLLFFFASVILAQVFLVLK.

It belongs to the cytochrome f family. In terms of assembly, the 4 large subunits of the cytochrome b6-f complex are cytochrome b6, subunit IV (17 kDa polypeptide, petD), cytochrome f and the Rieske protein, while the 4 small subunits are PetG, PetL, PetM and PetN. The complex functions as a dimer. Heme is required as a cofactor.

The protein localises to the plastid. It is found in the chloroplast thylakoid membrane. Functionally, component of the cytochrome b6-f complex, which mediates electron transfer between photosystem II (PSII) and photosystem I (PSI), cyclic electron flow around PSI, and state transitions. The sequence is that of Cytochrome f from Oryza nivara (Indian wild rice).